The sequence spans 134 residues: MVKEFAGIKYKLDSQTNFEEYMKAIGVGAIERKAGLALSPVIELEILDGDKFKLTSKTAIKNTEFTFKLGEEFDEETLDGRKVKSTITQDGPNKLVHEQKGDHPTIIIREFSKEQCVITIKLGDLVATRIYKAQ.

(9Z)-octadecenoate is bound by residues arginine 109 and 129-131 (RIY).

It belongs to the calycin superfamily. Fatty-acid binding protein (FABP) family. Monomer. Adult flight muscle.

It localises to the cytoplasm. In terms of biological role, binds fatty acids in a 1:1 molar ratio. The chain is Fatty acid-binding protein, muscle from Schistocerca gregaria (Desert locust).